The following is a 221-amino-acid chain: Fructokinase (221 aa).

The protein belongs to the carbohydrate kinase PfkB family.

It catalyses the reaction D-fructose + ATP = D-fructose 6-phosphate + ADP + H(+). This chain is Fructokinase (scrK), found in Salmonella thompson.